A 511-amino-acid chain; its full sequence is Maturase K (511 aa).

The protein belongs to the intron maturase 2 family. MatK subfamily.

The protein localises to the plastid. It is found in the chloroplast. Its function is as follows. Usually encoded in the trnK tRNA gene intron. Probably assists in splicing its own and other chloroplast group II introns. The protein is Maturase K of Nardus stricta (Mat-grass).